A 466-amino-acid chain; its full sequence is Acetylornithine aminotransferase, mitochondrial (466 aa).

K308 bears the N6-(pyridoxal phosphate)lysine mark.

The protein belongs to the class-III pyridoxal-phosphate-dependent aminotransferase family. Requires pyridoxal 5'-phosphate as cofactor.

The protein localises to the mitochondrion matrix. It catalyses the reaction N(2)-acetyl-L-ornithine + 2-oxoglutarate = N-acetyl-L-glutamate 5-semialdehyde + L-glutamate. The protein operates within amino-acid biosynthesis; L-arginine biosynthesis; N(2)-acetyl-L-ornithine from L-glutamate: step 4/4. In Debaryomyces hansenii (strain ATCC 36239 / CBS 767 / BCRC 21394 / JCM 1990 / NBRC 0083 / IGC 2968) (Yeast), this protein is Acetylornithine aminotransferase, mitochondrial (ARG8).